The primary structure comprises 323 residues: Transcription factor LUX (323 aa).

Disordered regions lie at residues 1-25 (MGEEVQMSDYDVSGDGDRVSEWEMG), 53-139 (ERSR…DLSG), and 267-298 (GYHHQNHNHDPYHQNHRHHHGAGGNGAFESNP). Residues 65 to 87 (SETTLSSLRGGSSGPNTSSSNNN) show a composition bias toward low complexity. A DNA-binding region (myb-like GARP) is located at residues 139 to 200 (GKTLKRPRLV…HLQKYRLYLK (62 aa)).

Interacts with ELF3 and forms a complex with ELF3 and ELF4.

The protein localises to the nucleus. In terms of biological role, transcription factor that is essential for the generation of the circadian clock oscillation. Is necessary for activation of CCA1 and LHY expression. Is coregulated with TOC1 and seems to be repressed by CCA1 and LHY by direct binding of these proteins to the evening element in the LUX promoter. Directly regulates the expression of PRR9, a major component of the morning transcriptional feedback circuit, by binding specific sites on PRR9 promoter. Binds to its own promoter, inducing a negative auto-regulatory feedback loop within the core clock. Binds to ELF3 and associates with ELF4 in a diurnal complex which is required for the expression of the growth-promoting transcription factors PIF4 and PIF5 and subsequent hypocotyl growth in the early evening. In Arabidopsis thaliana (Mouse-ear cress), this protein is Transcription factor LUX (LUX).